Reading from the N-terminus, the 432-residue chain is Vacuolar protein sorting-associated protein 38 (432 aa).

Asn20 is a glycosylation site (N-linked (GlcNAc...) asparagine). Residues 216 to 287 (LDTYQENIKM…KEAIEKLQKK (72 aa)) adopt a coiled-coil conformation. A helical transmembrane segment spans residues 348–365 (IINAMLGFYSLFIVIYSY).

The protein belongs to the VPS38 family. As to quaternary structure, component of the VPS34 PI3-kinase complex II composed of VPS15, VPS30, VPS34 and VPS38.

It is found in the golgi apparatus. It localises to the trans-Golgi network membrane. The protein localises to the endosome membrane. Functionally, involved in endosome-to-Golgi retrograde transport as part of the VPS34 PI3-kinase complex II. This complex is required for the endosome-to-Golgi retrieval of PEP1 and KEX2, and the recruitment of VPS5 and VPS7, two components of the retromer complex, to endosomal membranes (probably through generating a specific pool of phosphatidylinositol 3-phosphate allowing the recruitment of the retromer complex proteins to the endosome). Mediates the interaction between VPS30 and the VPS34-VPS15 core complex, leading to the recruitment of VPS30 to the membrane. The sequence is that of Vacuolar protein sorting-associated protein 38 from Candida glabrata (strain ATCC 2001 / BCRC 20586 / JCM 3761 / NBRC 0622 / NRRL Y-65 / CBS 138) (Yeast).